We begin with the raw amino-acid sequence, 927 residues long: Ribosome-releasing factor 2, mitochondrial (927 aa).

Residues 1-57 constitute a mitochondrion transit peptide; sequence MVTAPLLGWVAVRPIPRLSKLNTCKYVSSSLQSYKRSVGSCLGKQQSRDFSYSATLT. Residues 64–379 form the tr-type G domain; sequence EKTRNIGIIA…AVNNLLPGPS (316 aa). Residues 73-80, 163-167, and 217-220 contribute to the GTP site; these read AHIDAGKT, DTPGH, and NKLD.

The protein belongs to the TRAFAC class translation factor GTPase superfamily. Classic translation factor GTPase family. EF-G/EF-2 subfamily.

It is found in the mitochondrion. Its function is as follows. Mitochondrial GTPase that mediates the disassembly of ribosomes from messenger RNA at the termination of mitochondrial protein biosynthesis. Not involved in the GTP-dependent ribosomal translocation step during translation elongation. This chain is Ribosome-releasing factor 2, mitochondrial (mef2), found in Talaromyces marneffei (strain ATCC 18224 / CBS 334.59 / QM 7333) (Penicillium marneffei).